Consider the following 422-residue polypeptide: p-hydroxyphenylacetate 3-hydroxylase, oxygenase component (422 aa).

Trp112 contributes to the FMN binding site. Positions 120 and 146 each coordinate substrate. FMN contacts are provided by residues 146 to 148 (SSI) and 169 to 171 (WSS). 263 to 266 (RPYF) provides a ligand contact to substrate. FMN-binding positions include Arg292, Tyr296, 374-375 (AT), and 396-397 (HA). Tyr296 lines the substrate pocket.

Belongs to the HpaH/HsaA monooxygenase family. Homotetramer. The p-hydroxyphenylacetate 3-hydroxylase (HpaH) is composed of an oxygenase component C2 and a reductase component C1.

The catalysed reaction is 4-hydroxyphenylacetate + FMNH2 + O2 = 3,4-dihydroxyphenylacetate + FMN + H2O + H(+). The enzyme catalyses 4-hydroxyphenylacetate + FADH2 + O2 = 3,4-dihydroxyphenylacetate + FAD + H2O + H(+). It participates in aromatic compound metabolism; 4-hydroxyphenylacetate degradation; pyruvate and succinate semialdehyde from 4-hydroxyphenylacetate: step 1/7. With respect to regulation, inhibited by flavin concentrations greater than 15 uM. Also inhibited by excess p-hydroxyphenylacetate (HPA). Functionally, oxygenase component of a two-component system that utilizes reduced FMN (FMNH2) supplied by the reductase component to catalyze the hydroxylation of 4-hydroxyphenylacetic acid, leading to the production of 3,4-dihydroxyphenylacetate (3,4-DHPA). Also utilizes other reduced flavins such as FADH2 and reduced riboflavin to a lesser extent. Only the compounds with a hydroxyl group in the para (p-) position can be hydroxylated. May also oxidize phenol to catechol, and hydroxylate other phenol derivatives. In Acinetobacter baumannii, this protein is p-hydroxyphenylacetate 3-hydroxylase, oxygenase component.